The chain runs to 220 residues: Ribonuclease HII (220 aa).

One can recognise an RNase H type-2 domain in the interval Lys32–Cys220. Asp38, Glu39, and Asp130 together coordinate a divalent metal cation.

It belongs to the RNase HII family. The cofactor is Mn(2+). Mg(2+) serves as cofactor.

Its subcellular location is the cytoplasm. It carries out the reaction Endonucleolytic cleavage to 5'-phosphomonoester.. Its function is as follows. Endonuclease that specifically degrades the RNA of RNA-DNA hybrids. This Brucella ovis (strain ATCC 25840 / 63/290 / NCTC 10512) protein is Ribonuclease HII.